Consider the following 844-residue polypeptide: Serrate RNA effector molecule homolog B (844 aa).

Disordered regions lie at residues 1-90, 277-401, 555-575, and 794-825; these read MADS…HGSD, EAAK…PRPL, ELLS…GNPT, and PNPY…MRGD. 2 stretches are compositionally biased toward basic and acidic residues: residues 16 to 73 and 277 to 337; these read FRRE…RHDI and EAAK…ETRK. Over residues 349-359 the composition is skewed to acidic residues; it reads SDDGSDSESDT. Over residues 376–397 the composition is skewed to basic and acidic residues; it reads DTPKKEEETEKPKEKPKEDTVK.

It belongs to the ARS2 family. Interacts ncbp1/cbp80.

It is found in the nucleus. The protein localises to the nucleoplasm. The protein resides in the cytoplasm. Functionally, acts as a mediator between the cap-binding complex (CBC) and the primary microRNAs (miRNAs) processing machinery during cell proliferation. Contributes to the stability and delivery of capped primary miRNA transcripts to the primary miRNA processing complex, thereby playing a role in RNA-mediated gene silencing (RNAi) by miRNAs. The chain is Serrate RNA effector molecule homolog B (srrt-b) from Xenopus laevis (African clawed frog).